The chain runs to 830 residues: uncharacterized protein (830 aa).

Disordered regions lie at residues 1 to 28, 70 to 147, and 186 to 210; these read MGVQ…DSIC, RRAN…GNFA, and AASP…SKSL. The segment covering 10–27 has biased composition (polar residues); it reads NSKNWLRQPDQQPIQDSI. 2 stretches are compositionally biased toward low complexity: residues 100-130 and 186-199; these read QKSS…SIQS and AASP…ASTS. The span at 200–210 shows a compositional bias: polar residues; that stretch reads ENLTPTSSKSL. Transmembrane regions (helical) follow at residues 505–525, 529–549, 551–571, 584–604, 622–642, 659–679, 691–711, 715–735, 740–760, and 802–822; these read WLVA…VYGG, DMLI…YINP, FFLF…FLGR, FCFA…YVVF, MLYA…GSAL, IIAV…LSLL, IQMF…LHFG, ISSA…SHFI, FAVV…AQGG, and IAIG…PFFG.

Belongs to the ThrE exporter (TC 2.A.79) family.

Its subcellular location is the cell membrane. The protein localises to the cell tip. This is an uncharacterized protein from Schizosaccharomyces pombe (strain 972 / ATCC 24843) (Fission yeast).